The chain runs to 408 residues: Serine/threonine transporter SstT (408 aa).

Helical transmembrane passes span 11-31 (LANGSLVLQILVGIIAGVSLA), 43-63 (FLGSLFVGALKAIAPILVFIL), 82-102 (IVVLYLFGTFAAALTAVVLSM), 141-161 (ALMTGNYIGILAWGVGLGLAL), 192-212 (IGIFGLVAATFAETGFAAIAG), 216-236 (LLAVLLGAMAIIALIVNPLIV), 290-310 (IPLGATINMGGAAITITVLTL), 316-336 (LGIQVDLLTALLLSVVAAISA), and 363-383 (VAMQVVAVGFIIGVIQDAAET).

Belongs to the dicarboxylate/amino acid:cation symporter (DAACS) (TC 2.A.23) family.

The protein resides in the cell inner membrane. It carries out the reaction L-serine(in) + Na(+)(in) = L-serine(out) + Na(+)(out). It catalyses the reaction L-threonine(in) + Na(+)(in) = L-threonine(out) + Na(+)(out). Involved in the import of serine and threonine into the cell, with the concomitant import of sodium (symport system). This Shewanella sp. (strain ANA-3) protein is Serine/threonine transporter SstT.